Reading from the N-terminus, the 101-residue chain is MAKQSMKAREVKRVALADKFFAKRAELKAIISDVNASDEDRWNAVLKLQSLPRDSSPSRQRNRCRQTGRPHAFLRKFGLSRIKVREAAMRGEIPGLKKASW.

The protein belongs to the universal ribosomal protein uS14 family. As to quaternary structure, part of the 30S ribosomal subunit. Contacts proteins S3 and S10.

Functionally, binds 16S rRNA, required for the assembly of 30S particles and may also be responsible for determining the conformation of the 16S rRNA at the A site. This chain is Small ribosomal subunit protein uS14, found in Enterobacter sp. (strain 638).